Reading from the N-terminus, the 326-residue chain is Peroxidase 3 (326 aa).

Positions Met1 to Ala24 are cleaved as a signal peptide. Cystine bridges form between Cys35-Cys113, Cys68-Cys73, Cys119-Cys321, and Cys198-Cys231. Residue His66 is the Proton acceptor of the active site. Residues Asp67, Val70, Gly72, Asp74, and Ser76 each contribute to the Ca(2+) site. 2 N-linked (GlcNAc...) asparagine glycosylation sites follow: Asn80 and Asn138. Pro161 contributes to the substrate binding site. Asn166 is a glycosylation site (N-linked (GlcNAc...) asparagine). His191 lines the heme b pocket. Thr192 contributes to the Ca(2+) binding site. 2 N-linked (GlcNAc...) asparagine glycosylation sites follow: Asn207 and Asn237. Asp244, Ser247, and Asp252 together coordinate Ca(2+).

The protein belongs to the peroxidase family. Classical plant (class III) peroxidase subfamily. Requires heme b as cofactor. It depends on Ca(2+) as a cofactor. Expressed in root cells.

The protein resides in the secreted. It catalyses the reaction 2 a phenolic donor + H2O2 = 2 a phenolic radical donor + 2 H2O. Its function is as follows. Removal of H(2)O(2), oxidation of toxic reductants, biosynthesis and degradation of lignin, suberization, auxin catabolism, response to environmental stresses such as wounding, pathogen attack and oxidative stress. These functions might be dependent on each isozyme/isoform in each plant tissue. The polypeptide is Peroxidase 3 (PER3) (Arabidopsis thaliana (Mouse-ear cress)).